The chain runs to 181 residues: NAD(P)H-quinone oxidoreductase subunit 6, chloroplastic (181 aa).

Helical transmembrane passes span 10-30 (TLLFVVLEFAILVGALGVVLL), 33-53 (VIYSALLLGFVFICVALLYLL), 62-82 (AQVLIYVGAVNVLIVFAIMLV), 98-118 (IISAFTFIALFVLLTIMIFTT), and 153-173 (LFPFELLSLLLLVALVGAITI).

It belongs to the complex I subunit 6 family. NDH is composed of at least 16 different subunits, 5 of which are encoded in the nucleus.

The protein resides in the plastid. Its subcellular location is the chloroplast thylakoid membrane. The enzyme catalyses a plastoquinone + NADH + (n+1) H(+)(in) = a plastoquinol + NAD(+) + n H(+)(out). The catalysed reaction is a plastoquinone + NADPH + (n+1) H(+)(in) = a plastoquinol + NADP(+) + n H(+)(out). NDH shuttles electrons from NAD(P)H:plastoquinone, via FMN and iron-sulfur (Fe-S) centers, to quinones in the photosynthetic chain and possibly in a chloroplast respiratory chain. The immediate electron acceptor for the enzyme in this species is believed to be plastoquinone. Couples the redox reaction to proton translocation, and thus conserves the redox energy in a proton gradient. The sequence is that of NAD(P)H-quinone oxidoreductase subunit 6, chloroplastic (ndhG) from Zygnema circumcarinatum (Green alga).